A 706-amino-acid chain; its full sequence is MVDPVPEEEKEGAEPGGSEGDEATASEPPDAQGAQQPAASSASASAAAPRKAEVPCGAEGGRREQSPLLHLDLFNFACPEAEGSRYVLTSPRSLEACARCAVKPVELLPRALADLVREAPGRSMRVATGLYEAYEAERLAKLQQCRAERERIMREEKRRLFTPKGPAAAPASASASASASALSGGSSSSCSSSSSLPASPASRVARRTSPSPPARSRPPPAGSRTGRKSHSLDSLSRRRDGALSSESGASSSSYSGESLRELRWPPRASARNSCPAGSASSAPNPLGRPSALALVPLTARSFSLGDLSHSPQTAQHVERIVRQVRAERGLRGVPERDRKIAALMLARHQEERLLLEQRAAAHGQWEQQRVRAEQRREREEREKQRALERGRRAWAAQVEERRGRRGREEREAARRRQQQCERSEERRRELAERQGLLRRERVERAARDDRLRKLQQEQNLKQREEGRQEGRERAELVRRERAQRAARARERQEGQLQREKRELSRAERARHEALLRGRVRQQQEEREGLRSSLEASLGRAQENYEQLQEQRARELRERARREELQGRRAKEAAERKEREHQAHLEALARAGERRLQHAAQVAEEAVQQKARRVVQTRLEKERAQRANKEKVERDEDCRRRELLQAIGRKLERSEQLSRERRSALESARSTARASFHVREKVREETNTRSFDRMVREAQLHASLDRK.

Acidic residues predominate over residues Met1 to Glu11. 3 disordered regions span residues Met1–Arg63, Ala179–Leu262, and Ala268–Gly287. Low complexity-rich tracts occupy residues Pro28–Pro49 and Ala179–Ser209. The span at Pro210 to Ala221 shows a compositional bias: pro residues. Residues Ala242–Glu257 show a composition bias toward low complexity. Phosphoserine is present on Ser310. Residues Ala360–Gln624 are a coiled coil. Disordered regions lie at residues Gln364–Ala386, Val398–Glu425, Asp448–His580, and Glu651–Lys706. Residues Gln368 to Ala386 are compositionally biased toward basic and acidic residues. Composition is skewed to basic and acidic residues over residues Asp448–Leu529, Gln548–His580, and Glu651–Ala663. The span at Leu664 to Ser674 shows a compositional bias: low complexity. The segment covering His676–Lys706 has biased composition (basic and acidic residues).

The sequence is that of Coiled-coil domain-containing protein 177 (Ccdc177) from Mus musculus (Mouse).